The primary structure comprises 116 residues: Protein Rev (116 aa).

Phosphoserine; by host CK2 is present on residues serine 5 and serine 8. The segment at 18 to 26 (LIKFLYQSN) is homomultimerization. A disordered region spans residues 23-49 (YQSNPPPNPEGTRQARRNRRRRWRERQ). The Nuclear localization signal and RNA-binding (RRE) motif lies at 34–50 (TRQARRNRRRRWRERQR). Over residues 36 to 47 (QARRNRRRRWRE) the composition is skewed to basic residues. The short motif at 73-84 (LQLPPLERLTLD) is the Nuclear export signal and binding to XPO1 element. Phosphoserine; by host is present on residues serine 92 and serine 99.

The protein belongs to the HIV-1 REV protein family. As to quaternary structure, homomultimer; when bound to the RRE. Multimeric assembly is essential for activity and may involve XPO1. Binds to human KPNB1, XPO1, TNPO1, RANBP5 and IPO7. Interacts with the viral Integrase. Interacts with human KHDRBS1. Interacts with human NAP1; this interaction decreases Rev multimerization and stimulates its activity. Interacts with human DEAD-box helicases DDX3 and DDX24; these interactions may serve for viral RNA export to the cytoplasm and packaging, respectively. Interacts with human PSIP1; this interaction may inhibit HIV-1 DNA integration by promoting dissociation of the Integrase-LEDGF/p75 complex. In terms of processing, asymmetrically arginine dimethylated at one site by host PRMT6. Methylation impairs the RNA-binding activity and export of viral RNA from the nucleus to the cytoplasm. Post-translationally, phosphorylated by protein kinase CK2. Presence of, and maybe binding to the N-terminus of the regulatory beta subunit of CK2 is necessary for CK2-mediated Rev's phosphorylation.

Its subcellular location is the host nucleus. It localises to the host nucleolus. It is found in the host cytoplasm. Functionally, escorts unspliced or incompletely spliced viral pre-mRNAs (late transcripts) out of the nucleus of infected cells. These pre-mRNAs carry a recognition sequence called Rev responsive element (RRE) located in the env gene, that is not present in fully spliced viral mRNAs (early transcripts). This function is essential since most viral proteins are translated from unspliced or partially spliced pre-mRNAs which cannot exit the nucleus by the pathway used by fully processed cellular mRNAs. Rev itself is translated from a fully spliced mRNA that readily exits the nucleus. Rev's nuclear localization signal (NLS) binds directly to KPNB1/Importin beta-1 without previous binding to KPNA1/Importin alpha-1. KPNB1 binds to the GDP bound form of RAN (Ran-GDP) and targets Rev to the nucleus. In the nucleus, the conversion from Ran-GDP to Ran-GTP dissociates Rev from KPNB1 and allows Rev's binding to the RRE in viral pre-mRNAs. Rev multimerization on the RRE via cooperative assembly exposes its nuclear export signal (NES) to the surface. Rev can then form a complex with XPO1/CRM1 and Ran-GTP, leading to nuclear export of the complex. Conversion from Ran-GTP to Ran-GDP mediates dissociation of the Rev/RRE/XPO1/RAN complex, so that Rev can return to the nucleus for a subsequent round of export. Beside KPNB1, also seems to interact with TNPO1/Transportin-1, RANBP5/IPO5 and IPO7/RANBP7 for nuclear import. The nucleoporin-like HRB/RIP is an essential cofactor that probably indirectly interacts with Rev to release HIV RNAs from the perinuclear region to the cytoplasm. The sequence is that of Protein Rev from Human immunodeficiency virus type 1 group M subtype B (isolate HXB3) (HIV-1).